The following is a 337-amino-acid chain: Glyceraldehyde-3-phosphate dehydrogenase (337 aa).

NAD(+) is bound by residues R13–I14, D35, and R80. D-glyceraldehyde 3-phosphate is bound by residues S150 to T152, T181, T210 to G211, and R233. The active-site Nucleophile is C151. NAD(+) is bound at residue N315.

This sequence belongs to the glyceraldehyde-3-phosphate dehydrogenase family. As to quaternary structure, homotetramer.

It is found in the cytoplasm. The enzyme catalyses D-glyceraldehyde 3-phosphate + phosphate + NAD(+) = (2R)-3-phospho-glyceroyl phosphate + NADH + H(+). The protein operates within carbohydrate degradation; glycolysis; pyruvate from D-glyceraldehyde 3-phosphate: step 1/5. This Colletotrichum lindemuthianum (Bean anthracnose fungus) protein is Glyceraldehyde-3-phosphate dehydrogenase (GPDA).